Here is a 142-residue protein sequence, read N- to C-terminus: MPFTQKEITYLRAQGYGRLATVGAHGEPHNVPVSFEIDEERGTIEITGRDMGRSRKFRNVAKNDRVAFVVDDVPCRDPEVVRAVVIHGTAQALPTGGRERRPHCADEMIRIHPRRIVTWGIEGDLSTGVHARDITAEDGGRR.

It belongs to the pyridoxamine 5'-phosphate oxidase family.

The enzyme catalyses tetracycline + oxidized coenzyme F420-(gamma-L-Glu)(n) + H(+) = 5a,11a-dehydrotetracycline + reduced coenzyme F420-(gamma-L-Glu)(n). It carries out the reaction oxytetracycline + oxidized coenzyme F420-(gamma-L-Glu)(n) + H(+) = 5a,11a-dehydrooxytetracycline + reduced coenzyme F420-(gamma-L-Glu)(n). The protein operates within antibiotic biosynthesis; oxytetracycline biosynthesis. In terms of biological role, involved in the biosynthesis of the antibiotics tetracycline and oxytetracycline. Catalyzes the C(5) reduction of 5a,11a-dehydrooxytetracycline to yield oxytetracycline as a major product. Also catalyzes the C(12) reduction of 5a,11a-dehydrotetracycline (12-dehydrotetracycline) to produce tetracycline as a minor product. The chain is 5a,11a-dehydrotetracycline/5a,11a-dehydrooxytetracycline reductase from Streptomyces rimosus subsp. rimosus (strain ATCC 10970 / DSM 40260 / JCM 4667 / NRRL 2234).